We begin with the raw amino-acid sequence, 614 residues long: UvrABC system protein C (614 aa).

The GIY-YIG domain maps to 20 to 98 (TAPGVYRMYA…IKSLSPRYNV (79 aa)). In terms of domain architecture, UVR spans 207 to 242 (DELTRELGEQMQAASEALEFEQAARLRDLISSLRSM).

This sequence belongs to the UvrC family. In terms of assembly, interacts with UvrB in an incision complex.

It localises to the cytoplasm. Functionally, the UvrABC repair system catalyzes the recognition and processing of DNA lesions. UvrC both incises the 5' and 3' sides of the lesion. The N-terminal half is responsible for the 3' incision and the C-terminal half is responsible for the 5' incision. The protein is UvrABC system protein C of Stenotrophomonas maltophilia (strain K279a).